A 211-amino-acid polypeptide reads, in one-letter code: Thymidylate kinase (211 aa).

Residue 11–18 (GPDGAGKT) coordinates ATP.

This sequence belongs to the thymidylate kinase family.

The catalysed reaction is dTMP + ATP = dTDP + ADP. Its function is as follows. Phosphorylation of dTMP to form dTDP in both de novo and salvage pathways of dTTP synthesis. This chain is Thymidylate kinase, found in Streptococcus pyogenes serotype M18 (strain MGAS8232).